Here is a 343-residue protein sequence, read N- to C-terminus: Uroporphyrinogen decarboxylase (343 aa).

Substrate is bound by residues 23 to 27 (RQAGR), Asp73, Tyr149, Thr204, and His320.

The protein belongs to the uroporphyrinogen decarboxylase family. Homodimer.

Its subcellular location is the cytoplasm. It catalyses the reaction uroporphyrinogen III + 4 H(+) = coproporphyrinogen III + 4 CO2. The protein operates within porphyrin-containing compound metabolism; protoporphyrin-IX biosynthesis; coproporphyrinogen-III from 5-aminolevulinate: step 4/4. Its function is as follows. Catalyzes the decarboxylation of four acetate groups of uroporphyrinogen-III to yield coproporphyrinogen-III. The polypeptide is Uroporphyrinogen decarboxylase (Bradyrhizobium sp. (strain BTAi1 / ATCC BAA-1182)).